A 292-amino-acid polypeptide reads, in one-letter code: Homoserine kinase (292 aa).

ATP is bound at residue 84 to 94; the sequence is PLSRGLGSSSA.

This sequence belongs to the GHMP kinase family. Homoserine kinase subfamily.

The protein localises to the cytoplasm. The catalysed reaction is L-homoserine + ATP = O-phospho-L-homoserine + ADP + H(+). The protein operates within amino-acid biosynthesis; L-threonine biosynthesis; L-threonine from L-aspartate: step 4/5. Functionally, catalyzes the ATP-dependent phosphorylation of L-homoserine to L-homoserine phosphate. The chain is Homoserine kinase from Campylobacter jejuni subsp. doylei (strain ATCC BAA-1458 / RM4099 / 269.97).